We begin with the raw amino-acid sequence, 645 residues long: DNA mismatch repair protein MutL (645 aa).

A disordered region spans residues 371–403; the sequence is VHDQKDKNHDVESHKNNLDSTSSTNNESTEVSN. A compositionally biased stretch (basic and acidic residues) spans 372 to 387; sequence HDQKDKNHDVESHKNN. Over residues 390–402 the composition is skewed to low complexity; it reads STSSTNNESTEVS.

The protein belongs to the DNA mismatch repair MutL/HexB family.

Its function is as follows. This protein is involved in the repair of mismatches in DNA. It is required for dam-dependent methyl-directed DNA mismatch repair. May act as a 'molecular matchmaker', a protein that promotes the formation of a stable complex between two or more DNA-binding proteins in an ATP-dependent manner without itself being part of a final effector complex. The polypeptide is DNA mismatch repair protein MutL (Staphylococcus epidermidis (strain ATCC 35984 / DSM 28319 / BCRC 17069 / CCUG 31568 / BM 3577 / RP62A)).